The primary structure comprises 293 residues: uncharacterized protein (293 aa).

The span at 1–10 (MHMQLRKRKR) shows a compositional bias: basic residues. A disordered region spans residues 1–28 (MHMQLRKRKRVDYSGRNQTSDPPSTTTA). Positions 15 to 28 (GRNQTSDPPSTTTA) are enriched in polar residues.

It is found in the nucleus. This is an uncharacterized protein from Saccharomyces cerevisiae (strain ATCC 204508 / S288c) (Baker's yeast).